The primary structure comprises 729 residues: Polyribonucleotide nucleotidyltransferase (729 aa).

The Mg(2+) site is built by D509 and D515. In terms of domain architecture, KH spans 575-634; sequence PRVISVKIPVDKIGEVIGPKGKMINQIQADSGAEITVEDDGTIYIGAVDGPSAESARSAI. The 73-residue stretch at 646–718 folds into the S1 motif domain; it reads GERYLGTIVK…SRGKISLSPS (73 aa).

It belongs to the polyribonucleotide nucleotidyltransferase family. It depends on Mg(2+) as a cofactor.

It is found in the cytoplasm. The catalysed reaction is RNA(n+1) + phosphate = RNA(n) + a ribonucleoside 5'-diphosphate. In terms of biological role, involved in mRNA degradation. Catalyzes the phosphorolysis of single-stranded polyribonucleotides processively in the 3'- to 5'-direction. This chain is Polyribonucleotide nucleotidyltransferase, found in Frankia casuarinae (strain DSM 45818 / CECT 9043 / HFP020203 / CcI3).